Consider the following 476-residue polypeptide: Membrane-bound lytic murein transglycosylase F (476 aa).

The first 22 residues, 1-22 (MTRFLFALILGFLLTACQQVTV), serve as a signal peptide directing secretion. The non-LT domain stretch occupies residues 23 to 257 (DETEFVPKKL…HLNEKYFGHV (235 aa)). The tract at residues 258 to 476 (KRFDYVDTRA…AGTLSPEQPK (219 aa)) is LT domain. The active site involves Glu302. Positions 446 to 476 (SKQQNPEEEPSDLASEEPAIPAGTLSPEQPK) are disordered. The span at 451 to 460 (PEEEPSDLAS) shows a compositional bias: acidic residues.

This sequence in the N-terminal section; belongs to the bacterial solute-binding protein 3 family. The protein in the C-terminal section; belongs to the transglycosylase Slt family.

Its subcellular location is the cell outer membrane. The catalysed reaction is Exolytic cleavage of the (1-&gt;4)-beta-glycosidic linkage between N-acetylmuramic acid (MurNAc) and N-acetylglucosamine (GlcNAc) residues in peptidoglycan, from either the reducing or the non-reducing ends of the peptidoglycan chains, with concomitant formation of a 1,6-anhydrobond in the MurNAc residue.. Its function is as follows. Murein-degrading enzyme that degrades murein glycan strands and insoluble, high-molecular weight murein sacculi, with the concomitant formation of a 1,6-anhydromuramoyl product. Lytic transglycosylases (LTs) play an integral role in the metabolism of the peptidoglycan (PG) sacculus. Their lytic action creates space within the PG sacculus to allow for its expansion as well as for the insertion of various structures such as secretion systems and flagella. The protein is Membrane-bound lytic murein transglycosylase F of Shewanella baltica (strain OS155 / ATCC BAA-1091).